Consider the following 392-residue polypeptide: 3-ketoacyl-CoA thiolase (392 aa).

The active-site Acyl-thioester intermediate is C95. Residues H347 and C377 each act as proton acceptor in the active site.

This sequence belongs to the thiolase-like superfamily. Thiolase family. Heterotetramer of two alpha chains (FadB) and two beta chains (FadA).

It localises to the cytoplasm. The enzyme catalyses an acyl-CoA + acetyl-CoA = a 3-oxoacyl-CoA + CoA. The protein operates within lipid metabolism; fatty acid beta-oxidation. Its function is as follows. Catalyzes the final step of fatty acid oxidation in which acetyl-CoA is released and the CoA ester of a fatty acid two carbons shorter is formed. This chain is 3-ketoacyl-CoA thiolase, found in Chromohalobacter salexigens (strain ATCC BAA-138 / DSM 3043 / CIP 106854 / NCIMB 13768 / 1H11).